Here is a 228-residue protein sequence, read N- to C-terminus: MAKRATRARPGRGRFITFEGGEGSGKSTQIQLLAERLKGQGIETLVTREPGGSPGAEIVRHLLLSGVGKLLGADAETLLFAAARDDHVHQVIEPALKKGVWVLCDRFTDSTAAYQGAAGKVDAAFIEALTHATIGDLEPDLTLILDVPVAVGLHRAIKRRGKAVADRFEQESLSFHESLRDAYRKIAADNPKRCAVVDANADAATVSERIWETMQHRLASALPARARA.

20 to 27 (GGEGSGKS) contacts ATP.

Belongs to the thymidylate kinase family.

The enzyme catalyses dTMP + ATP = dTDP + ADP. Phosphorylation of dTMP to form dTDP in both de novo and salvage pathways of dTTP synthesis. The chain is Thymidylate kinase from Afipia carboxidovorans (strain ATCC 49405 / DSM 1227 / KCTC 32145 / OM5) (Oligotropha carboxidovorans).